The following is a 502-amino-acid chain: Nondiscriminating glutamyl-tRNA synthetase EARS2, mitochondrial (502 aa).

A mitochondrion-targeting transit peptide spans 1 to 20; that stretch reads MAGMLREVCGAAASGLRVRF. An L-glutamate-binding site is contributed by 19 to 21; that stretch reads RFG. Residues 24-32 carry the 'HIGH' region motif; that stretch reads PTGFLHLGG. Histidine 29 is a binding site for ATP. L-glutamate-binding positions include glutamate 55, 207 to 211, and arginine 225; that span reads YHLAN. ATP is bound by residues glutamate 228 and 263–267; that span reads KLSKR. Residues 263-267 carry the 'KMSKS' region motif; it reads KLSKR.

Belongs to the class-I aminoacyl-tRNA synthetase family. Glutamate--tRNA ligase type 1 subfamily.

It is found in the mitochondrion matrix. The catalysed reaction is tRNA(Glx) + L-glutamate + ATP = L-glutamyl-tRNA(Glx) + AMP + diphosphate. The enzyme catalyses tRNA(Glu) + L-glutamate + ATP = L-glutamyl-tRNA(Glu) + AMP + diphosphate. It carries out the reaction tRNA(Gln) + L-glutamate + ATP = L-glutamyl-tRNA(Gln) + AMP + diphosphate. Its function is as follows. Non-discriminating glutamyl-tRNA synthetase that catalyzes aminoacylation of both mitochondrial tRNA(Glu) and tRNA(Gln) and participates in RNA aminoacylation for mitochondrial protein translation. Attachs glutamate to tRNA(Glu) or tRNA(Gln) in a two-step reaction: glutamate is first activated by ATP to form Glu-AMP and then transferred to the acceptor end of tRNA(Glu) or tRNA(Gln). The chain is Nondiscriminating glutamyl-tRNA synthetase EARS2, mitochondrial from Gallus gallus (Chicken).